A 32-amino-acid chain; its full sequence is Periplasmic [NiFe] hydrogenase small subunit (32 aa).

Residues C17 and C20 each contribute to the [4Fe-4S] cluster site.

The protein belongs to the [NiFe]/[NiFeSe] hydrogenase small subunit family. Heterodimer of a large and a small subunit. [3Fe-4S] cluster serves as cofactor. The cofactor is [4Fe-4S] cluster.

The protein localises to the periplasm. The enzyme catalyses 2 Fe(III)-[cytochrome c3] + H2 = 2 Fe(II)-[cytochrome c3] + 2 H(+). In Desulfovibrio multispirans, this protein is Periplasmic [NiFe] hydrogenase small subunit (hydA).